A 487-amino-acid polypeptide reads, in one-letter code: Arginine ADP-riboxanase OspC3 (487 aa).

Over residues 1–14 the composition is skewed to polar residues; sequence MRVETHSPSFTNPN. A disordered region spans residues 1-41; the sequence is MRVETHSPSFTNPNPAEACSGDPTEMGSRLSGVSRAPLPHA. Residues H137, Q138, S139, S164, N167, and T168 each contribute to the NAD(+) site. Residue E325 is part of the active site. 2 ANK repeats span residues 368-398 and 444-473; these read DAVT…EAKD and RGDT…DRNL.

This sequence belongs to the OspC family.

It localises to the secreted. It is found in the host cytoplasm. It catalyses the reaction L-arginyl-[protein] + NAD(+) = ADP-riboxanated L-argininyl-[protein] + nicotinamide + NH4(+) + H(+). Functionally, ADP-riboxanase effector that inhibits host cell pyroptosis. Acts by mediating arginine ADP-riboxanation of host CASP4/CASP11, blocking CASP4/CASP11 autoprocessing. This prevents CASP4 activation and ability to recognize and cleave GSDMD, thereby inhibiting LPS-induced pyroptosis. ADP-riboxanation takes place in two steps: OspC3 first catalyzes ADP-ribosylation of target Arg, and then initiates a deamination to remove one N-omega group. In Chromobacterium sp. (strain ATCC 53434 / SC 14030), this protein is Arginine ADP-riboxanase OspC3.